Reading from the N-terminus, the 250-residue chain is tRNA pseudouridine synthase A (250 aa).

Residue D52 is the Nucleophile of the active site. Y111 contacts substrate.

Belongs to the tRNA pseudouridine synthase TruA family. As to quaternary structure, homodimer.

The enzyme catalyses uridine(38/39/40) in tRNA = pseudouridine(38/39/40) in tRNA. Its function is as follows. Formation of pseudouridine at positions 38, 39 and 40 in the anticodon stem and loop of transfer RNAs. This Methylobacterium sp. (strain 4-46) protein is tRNA pseudouridine synthase A.